Reading from the N-terminus, the 291-residue chain is MKSQFRHVALIGKYHAQGSRSALEDIAHFLGTQGCDVAIEQDTASNTGLTQFPTLDAAGIGAQCDLALVVGGDGTMLGIGRLLAQFGIPLVGINQGRLGFITDIAFEDYQDTLKPMLRGEFEEDRRWMMQAKVVRDGRCVFSATAMNDVVVNRGATAGMVELRVEVDGRFVANQRADGLIIASPTGSTAYALSAGGPLLHPSIPGWVLVPIAPHTLSNRPIVLSDAGEITVEIVAGRDASANFDMQSLATLLHGDRITVRRSEHQMRFLHPKGWSYFDTLRKKLHWNEGVA.

Catalysis depends on Asp73, which acts as the Proton acceptor. NAD(+) is bound by residues 73–74 (DG), 147–148 (ND), Arg175, Asp177, 188–193 (TAYALS), Ala212, and Gln246.

Belongs to the NAD kinase family. It depends on a divalent metal cation as a cofactor.

The protein localises to the cytoplasm. It carries out the reaction NAD(+) + ATP = ADP + NADP(+) + H(+). Involved in the regulation of the intracellular balance of NAD and NADP, and is a key enzyme in the biosynthesis of NADP. Catalyzes specifically the phosphorylation on 2'-hydroxyl of the adenosine moiety of NAD to yield NADP. This Polaromonas sp. (strain JS666 / ATCC BAA-500) protein is NAD kinase.